A 124-amino-acid chain; its full sequence is uncharacterized protein (124 aa).

Belongs to the asfivirus H124R family.

Its subcellular location is the virion. This is an uncharacterized protein from Ornithodoros (relapsing fever ticks).